A 343-amino-acid chain; its full sequence is Selenide, water dikinase (343 aa).

Residue U13 is part of the active site. Position 13 (U13) is a non-standard amino acid, selenocysteine. Residues K16 and 44–46 (TAD) each bind ATP. Position 47 (D47) interacts with Mg(2+). Residues D64, D87, and 135–137 (GHT) each bind ATP. D87 lines the Mg(2+) pocket. Mg(2+) is bound at residue D223.

This sequence belongs to the selenophosphate synthase 1 family. Class I subfamily. As to quaternary structure, homodimer. Mg(2+) is required as a cofactor.

It catalyses the reaction hydrogenselenide + ATP + H2O = selenophosphate + AMP + phosphate + 2 H(+). Synthesizes selenophosphate from selenide and ATP. This Geobacter metallireducens (strain ATCC 53774 / DSM 7210 / GS-15) protein is Selenide, water dikinase.